The sequence spans 293 residues: Immediate early response gene 5-like protein (293 aa).

It belongs to the IER family.

In Xenopus laevis (African clawed frog), this protein is Immediate early response gene 5-like protein (ier5l).